A 341-amino-acid chain; its full sequence is MKFVDEALIKVEAGKGGNGCLSFRREKFIPRGGPDGGDGGDGGSIYFEASSDLNTLIDFRYTRQYKAENGQSGMGGNCTGKKGEDLTIKVPVGTMVYDADTGELLADISQPGVPVLIAQGGFHGLGNTRYKSSVNRSPRQTTPGSPGESRNLRLELRVLADVGLLGLPNAGKSTLIRAVSSSKAKVADYPFTTLHPGLGVVRVSPYKSFVMADIPGLIEGAAQGAGLGHRFLKHLSRTCVLLHVIDIAPLDGSDPVADAKAILNELTQYNPDLLNKPRWLVLNKIDMLPDEKEREEKIQSIIKGLKWKDKVFSISAIESKGTQELCYALMQLIDEMKESEA.

Residues 1-159 enclose the Obg domain; the sequence is MKFVDEALIK…RNLRLELRVL (159 aa). Residues 128–150 are disordered; it reads TRYKSSVNRSPRQTTPGSPGESR. Residues 129-144 show a composition bias toward polar residues; sequence RYKSSVNRSPRQTTPG. In terms of domain architecture, OBG-type G spans 160–334; it reads ADVGLLGLPN…LCYALMQLID (175 aa). Residues 166–173, 191–195, 213–216, 283–286, and 315–317 contribute to the GTP site; these read GLPNAGKS, FTTLH, DIPG, NKID, and SAI. Mg(2+)-binding residues include Ser173 and Thr193.

Belongs to the TRAFAC class OBG-HflX-like GTPase superfamily. OBG GTPase family. As to quaternary structure, monomer. Mg(2+) serves as cofactor.

Its subcellular location is the cytoplasm. Functionally, an essential GTPase which binds GTP, GDP and possibly (p)ppGpp with moderate affinity, with high nucleotide exchange rates and a fairly low GTP hydrolysis rate. Plays a role in control of the cell cycle, stress response, ribosome biogenesis and in those bacteria that undergo differentiation, in morphogenesis control. This Legionella pneumophila (strain Paris) protein is GTPase Obg.